Consider the following 377-residue polypeptide: GDSL esterase/lipase 4 (377 aa).

Positions 1-21 are cleaved as a signal peptide; sequence MASPRFNSIIIILFICTISLS. The active-site Nucleophile is the Ser44. N-linked (GlcNAc...) asparagine glycans are attached at residues Asn135, Asn188, Asn194, Asn207, and Asn241. Catalysis depends on residues Asp342 and His345. A glycan (N-linked (GlcNAc...) asparagine) is linked at Asn364.

It belongs to the 'GDSL' lipolytic enzyme family.

It localises to the secreted. The chain is GDSL esterase/lipase 4 (GLIP4) from Arabidopsis thaliana (Mouse-ear cress).